A 320-amino-acid polypeptide reads, in one-letter code: ATP-dependent 6-phosphofructokinase (320 aa).

Gly-12 provides a ligand contact to ATP. Residues 22 to 26 (RGVVR) and 55 to 60 (RYSVSD) each bind ADP. ATP contacts are provided by residues 73-74 (RF) and 103-106 (GDGS). Asp-104 provides a ligand contact to Mg(2+). 126–128 (TID) contributes to the substrate binding site. The Proton acceptor role is filled by Asp-128. ADP is bound at residue Arg-155. Substrate-binding positions include Arg-163 and 170 to 172 (MGR). Residues 186–188 (GCE), Lys-212, and 214–216 (KKH) each bind ADP. Substrate-binding positions include Glu-223, Arg-244, and 250–253 (HIQR).

It belongs to the phosphofructokinase type A (PFKA) family. ATP-dependent PFK group I subfamily. Prokaryotic clade 'B1' sub-subfamily. As to quaternary structure, homotetramer. The cofactor is Mg(2+).

It is found in the cytoplasm. The enzyme catalyses beta-D-fructose 6-phosphate + ATP = beta-D-fructose 1,6-bisphosphate + ADP + H(+). The protein operates within carbohydrate degradation; glycolysis; D-glyceraldehyde 3-phosphate and glycerone phosphate from D-glucose: step 3/4. Its activity is regulated as follows. Allosterically activated by ADP and other diphosphonucleosides, and allosterically inhibited by phosphoenolpyruvate. In terms of biological role, catalyzes the phosphorylation of D-fructose 6-phosphate to fructose 1,6-bisphosphate by ATP, the first committing step of glycolysis. This is ATP-dependent 6-phosphofructokinase from Buchnera aphidicola subsp. Schizaphis graminum (strain Sg).